The primary structure comprises 115 residues: Phosphoribosyl-AMP cyclohydrolase (115 aa).

Asp80 is a binding site for Mg(2+). Cys81 contacts Zn(2+). Mg(2+) contacts are provided by Asp82 and Asp84. Residues Cys97 and Cys104 each contribute to the Zn(2+) site.

It belongs to the PRA-CH family. In terms of assembly, homodimer. Mg(2+) is required as a cofactor. Zn(2+) serves as cofactor.

Its subcellular location is the cytoplasm. The catalysed reaction is 1-(5-phospho-beta-D-ribosyl)-5'-AMP + H2O = 1-(5-phospho-beta-D-ribosyl)-5-[(5-phospho-beta-D-ribosylamino)methylideneamino]imidazole-4-carboxamide. It functions in the pathway amino-acid biosynthesis; L-histidine biosynthesis; L-histidine from 5-phospho-alpha-D-ribose 1-diphosphate: step 3/9. Catalyzes the hydrolysis of the adenine ring of phosphoribosyl-AMP. This chain is Phosphoribosyl-AMP cyclohydrolase, found in Mycobacterium leprae (strain Br4923).